Consider the following 456-residue polypeptide: tRNA modification GTPase MnmE (456 aa).

(6S)-5-formyl-5,6,7,8-tetrahydrofolate is bound by residues R24, E81, and K120. Positions 216-379 constitute a TrmE-type G domain; sequence GMKVVIAGRP…LREHLKECIG (164 aa). A K(+)-binding site is contributed by N226. GTP contacts are provided by residues 226-231, 245-251, and 270-273; these read NAGKSS, TAIEGTT, and DTAG. S230 is a Mg(2+) binding site. Residues T245, I247, and T250 each coordinate K(+). Residue T251 participates in Mg(2+) binding. K456 serves as a coordination point for (6S)-5-formyl-5,6,7,8-tetrahydrofolate.

This sequence belongs to the TRAFAC class TrmE-Era-EngA-EngB-Septin-like GTPase superfamily. TrmE GTPase family. As to quaternary structure, homodimer. Heterotetramer of two MnmE and two MnmG subunits. Requires K(+) as cofactor.

The protein resides in the cytoplasm. Functionally, exhibits a very high intrinsic GTPase hydrolysis rate. Involved in the addition of a carboxymethylaminomethyl (cmnm) group at the wobble position (U34) of certain tRNAs, forming tRNA-cmnm(5)s(2)U34. The sequence is that of tRNA modification GTPase MnmE from Marinobacter nauticus (strain ATCC 700491 / DSM 11845 / VT8) (Marinobacter aquaeolei).